The chain runs to 471 residues: MASLLIFPHLHHFDSSLDRREVLVVRHSQASRRFLTPKASINGSGITNGAAAETTSKPSRKGRKKKQTSTVIEKDNTETDPELNPELADYDDGIEFPYDDPPLVCCFGAVQKEFVPVVRVHDNPMHPDMYSQWKMLQWDPPEFGRAPGGPPSNVAISHVRLGGRAAFMGKVGEDDFGDELVLMMNQERVQTRAVKFDENSKTACTRVKIKFKDGKMMAETVKEPPEDSLFASELNLAVLKEARIFHFNSEVLTSPTMQSTLFTAIQWSKKFGGLIFFDLNLPLPLWRSRNETRKLIKKAWNEANIIEVSQQELEFLLDEDYYERRRNYTPQYFAEDFDQTKNRRDYYHYTPEEIKSLWHDKLKLLVVTDGTLRLHYYTPTFDGVVIGTEDVLITPFTCDRTGSGDAVVAGIMRKLTTCPEMFEDQDVMERQLRFAVAAGIIAQWTIGAVRGFPTESATQNLKEQVYVPSMW.

The transit peptide at 1–38 (MASLLIFPHLHHFDSSLDRREVLVVRHSQASRRFLTPK) directs the protein to the chloroplast. The tract at residues 36–85 (TPKASINGSGITNGAAAETTSKPSRKGRKKKQTSTVIEKDNTETDPELNP) is disordered. Residues 39-57 (ASINGSGITNGAAAETTSK) show a composition bias toward polar residues. A compositionally biased stretch (basic residues) spans 58–67 (PSRKGRKKKQ).

The protein belongs to the carbohydrate kinase PfkB family. As to quaternary structure, interacts with CITRX/TRXz. Interacts with PTAC7. Self-interacts. Binds to FLN2. Associates with the plastid-encoded RNA polymerase (PEP) complex.

The protein localises to the plastid. Its subcellular location is the chloroplast. Functionally, required for proper chloroplast development, most likely through regulating plastid-encoded polymerase (PEP) dependent chloroplast transcription. Acts as a component of the transcriptionally active plastid chromosome that is required for plastid gene expression. This is Fructokinase-like 1, chloroplastic from Arabidopsis thaliana (Mouse-ear cress).